The primary structure comprises 272 residues: NH(3)-dependent NAD(+) synthetase (272 aa).

An ATP-binding site is contributed by 43–50 (GLSGGQDS). D49 lines the Mg(2+) pocket. R138 is a deamido-NAD(+) binding site. T158 is a binding site for ATP. E163 contacts Mg(2+). 2 residues coordinate deamido-NAD(+): K171 and D178. 2 residues coordinate ATP: K187 and T209. Residue 258–259 (HK) participates in deamido-NAD(+) binding.

Belongs to the NAD synthetase family. Homodimer.

It carries out the reaction deamido-NAD(+) + NH4(+) + ATP = AMP + diphosphate + NAD(+) + H(+). It functions in the pathway cofactor biosynthesis; NAD(+) biosynthesis; NAD(+) from deamido-NAD(+) (ammonia route): step 1/1. Its function is as follows. Catalyzes the ATP-dependent amidation of deamido-NAD to form NAD. Uses ammonia as a nitrogen source. The polypeptide is NH(3)-dependent NAD(+) synthetase (Halalkalibacterium halodurans (strain ATCC BAA-125 / DSM 18197 / FERM 7344 / JCM 9153 / C-125) (Bacillus halodurans)).